We begin with the raw amino-acid sequence, 184 residues long: Glutathione-regulated potassium-efflux system ancillary protein KefG (184 aa).

The protein belongs to the NAD(P)H dehydrogenase (quinone) family. KefG subfamily. In terms of assembly, interacts with KefB.

It is found in the cell inner membrane. It catalyses the reaction a quinone + NADH + H(+) = a quinol + NAD(+). The catalysed reaction is a quinone + NADPH + H(+) = a quinol + NADP(+). Its function is as follows. Regulatory subunit of a potassium efflux system that confers protection against electrophiles. Required for full activity of KefB. This chain is Glutathione-regulated potassium-efflux system ancillary protein KefG, found in Yersinia enterocolitica serotype O:8 / biotype 1B (strain NCTC 13174 / 8081).